Here is a 92-residue protein sequence, read N- to C-terminus: U21-hexatoxin-Hi1a (92 aa).

The N-terminal stretch at 1 to 19 (MKTILSMLIFVALFAAIVG) is a signal peptide. Intrachain disulfides connect C41–C55, C48–C67, C54–C82, and C85–C92.

Belongs to the neurotoxin 21 family. In terms of tissue distribution, expressed by the venom gland.

It is found in the secreted. Potent insecticidal toxin with probable ion channel impairing activity. In vivo, reversibly paralyzes all flies within 30 minutes, even at low dose (0.3 nmol/g). The sequence is that of U21-hexatoxin-Hi1a from Hadronyche infensa (Fraser island funnel-web spider).